The sequence spans 499 residues: Proline--tRNA ligase (499 aa).

The protein belongs to the class-II aminoacyl-tRNA synthetase family. ProS type 3 subfamily. As to quaternary structure, homodimer.

It is found in the cytoplasm. The enzyme catalyses tRNA(Pro) + L-proline + ATP = L-prolyl-tRNA(Pro) + AMP + diphosphate. Functionally, catalyzes the attachment of proline to tRNA(Pro) in a two-step reaction: proline is first activated by ATP to form Pro-AMP and then transferred to the acceptor end of tRNA(Pro). The protein is Proline--tRNA ligase of Bdellovibrio bacteriovorus (strain ATCC 15356 / DSM 50701 / NCIMB 9529 / HD100).